The primary structure comprises 195 residues: dCTP deaminase (195 aa).

DCTP-binding positions include 110–115 (RSSLAR), D128, 136–138 (VLE), Y171, K178, and Q182. Residue E138 is the Proton donor/acceptor of the active site. Positions 169-179 (RPYSSRKDAKY) are enriched in basic and acidic residues. Residues 169 to 195 (RPYSSRKDAKYKNQQSAVASRIDEDKE) are disordered.

It belongs to the dCTP deaminase family. Homotrimer.

It catalyses the reaction dCTP + H2O + H(+) = dUTP + NH4(+). Its pathway is pyrimidine metabolism; dUMP biosynthesis; dUMP from dCTP (dUTP route): step 1/2. Functionally, catalyzes the deamination of dCTP to dUTP. In Haemophilus influenzae (strain 86-028NP), this protein is dCTP deaminase.